The primary structure comprises 143 residues: Transcriptional regulator MraZ (143 aa).

2 SpoVT-AbrB domains span residues 5–47 (EYFH…PVSA) and 76–119 (ASNQ…DKEK).

This sequence belongs to the MraZ family. In terms of assembly, forms oligomers.

The protein resides in the cytoplasm. It localises to the nucleoid. This Finegoldia magna (strain ATCC 29328 / DSM 20472 / WAL 2508) (Peptostreptococcus magnus) protein is Transcriptional regulator MraZ.